The chain runs to 334 residues: Mucin-15 (334 aa).

An N-terminal signal peptide occupies residues 1-23 (MLALAKILLISTLFYSLLSGSHG). Residues 24–236 (KENQDINTTQ…SDPQKENRNT (213 aa)) are Extracellular-facing. N30, N61, N79, N90, N148, N155, N163, N218, and N225 each carry an N-linked (GlcNAc...) asparagine glycan. Positions 64–104 (TSNLKASHSPPLNLPNNSHGITDFSSNSSAEHSLGSLKPTS) are disordered. A compositionally biased stretch (polar residues) spans 77–94 (LPNNSHGITDFSSNSSAE). Residues 237–257 (GIVFGAILGAILGVSLLTLVG) form a helical membrane-spanning segment. The Cytoplasmic segment spans residues 258 to 334 (YLLCGKRKTD…DDIPPLRTSV (77 aa)). Residues 304–334 (PTLNDSAMPESEENARDGIPMDDIPPLRTSV) form a disordered region.

In terms of processing, highly glycosylated (N- and O-linked carbohydrates). As to expression, expressed in spleen, thymus, prostate, testis, ovary, small intestine, colon, peripheral blood leukocyte, bone marrow, lymph node and lung.

The protein localises to the cell membrane. It localises to the secreted. Its function is as follows. May play a role in the cell adhesion to the extracellular matrix. The sequence is that of Mucin-15 (MUC15) from Homo sapiens (Human).